The following is a 369-amino-acid chain: Actin-related protein T3 (369 aa).

This sequence belongs to the actin family. Interacts with PFN3. In terms of tissue distribution, testis specific (at protein level). Expressed specifically in haploid germ cells.

The protein localises to the cytoplasm. It localises to the cytoskeleton. Its subcellular location is the nucleus. In Mus musculus (Mouse), this protein is Actin-related protein T3 (Actrt3).